Here is a 96-residue protein sequence, read N- to C-terminus: Large ribosomal subunit protein uL23 (96 aa).

Belongs to the universal ribosomal protein uL23 family. As to quaternary structure, part of the 50S ribosomal subunit. Contacts protein L29, and trigger factor when it is bound to the ribosome.

In terms of biological role, one of the early assembly proteins it binds 23S rRNA. One of the proteins that surrounds the polypeptide exit tunnel on the outside of the ribosome. Forms the main docking site for trigger factor binding to the ribosome. This is Large ribosomal subunit protein uL23 from Alkaliphilus metalliredigens (strain QYMF).